Consider the following 72-residue polypeptide: Translation initiation factor IF-1 (72 aa).

The S1-like domain maps to 1-72; the sequence is MTKEEVLEFP…TKGRITYRFK (72 aa).

Belongs to the IF-1 family. Component of the 30S ribosomal translation pre-initiation complex which assembles on the 30S ribosome in the order IF-2 and IF-3, IF-1 and N-formylmethionyl-tRNA(fMet); mRNA recruitment can occur at any time during PIC assembly.

It localises to the cytoplasm. One of the essential components for the initiation of protein synthesis. Stabilizes the binding of IF-2 and IF-3 on the 30S subunit to which N-formylmethionyl-tRNA(fMet) subsequently binds. Helps modulate mRNA selection, yielding the 30S pre-initiation complex (PIC). Upon addition of the 50S ribosomal subunit IF-1, IF-2 and IF-3 are released leaving the mature 70S translation initiation complex. The chain is Translation initiation factor IF-1 from Agrobacterium fabrum (strain C58 / ATCC 33970) (Agrobacterium tumefaciens (strain C58)).